Consider the following 189-residue polypeptide: Probable nicotinate-nucleotide adenylyltransferase (189 aa).

It belongs to the NadD family.

The catalysed reaction is nicotinate beta-D-ribonucleotide + ATP + H(+) = deamido-NAD(+) + diphosphate. Its pathway is cofactor biosynthesis; NAD(+) biosynthesis; deamido-NAD(+) from nicotinate D-ribonucleotide: step 1/1. Its function is as follows. Catalyzes the reversible adenylation of nicotinate mononucleotide (NaMN) to nicotinic acid adenine dinucleotide (NaAD). This is Probable nicotinate-nucleotide adenylyltransferase from Bacillus cereus (strain Q1).